The primary structure comprises 82 residues: DNA-directed RNA polymerase subunit omega (82 aa).

It belongs to the RNA polymerase subunit omega family. In cyanobacteria the RNAP catalytic core is composed of 2 alpha, 1 beta, 1 beta', 1 gamma and 1 omega subunit. When a sigma factor is associated with the core the holoenzyme is formed, which can initiate transcription.

It catalyses the reaction RNA(n) + a ribonucleoside 5'-triphosphate = RNA(n+1) + diphosphate. Functionally, promotes RNA polymerase assembly. Latches the N- and C-terminal regions of the beta' subunit thereby facilitating its interaction with the beta and alpha subunits. This chain is DNA-directed RNA polymerase subunit omega, found in Trichodesmium erythraeum (strain IMS101).